A 966-amino-acid polypeptide reads, in one-letter code: Isoleucine--tRNA ligase (966 aa).

Positions 1–16 (MSDDKRAKSDKNEKNK) are enriched in basic and acidic residues. The segment at 1–24 (MSDDKRAKSDKNEKNKYPVNLLDT) is disordered. The 'HIGH' region motif lies at 69-79 (PYANGDIHIGH). Glutamate 599 contacts L-isoleucyl-5'-AMP. The short motif at 640-644 (KMSKS) is the 'KMSKS' region element. Residue lysine 643 coordinates ATP. Residues cysteine 929, cysteine 932, cysteine 949, and cysteine 952 each contribute to the Zn(2+) site.

Belongs to the class-I aminoacyl-tRNA synthetase family. IleS type 1 subfamily. As to quaternary structure, monomer. Requires Zn(2+) as cofactor.

It is found in the cytoplasm. It carries out the reaction tRNA(Ile) + L-isoleucine + ATP = L-isoleucyl-tRNA(Ile) + AMP + diphosphate. Catalyzes the attachment of isoleucine to tRNA(Ile). As IleRS can inadvertently accommodate and process structurally similar amino acids such as valine, to avoid such errors it has two additional distinct tRNA(Ile)-dependent editing activities. One activity is designated as 'pretransfer' editing and involves the hydrolysis of activated Val-AMP. The other activity is designated 'posttransfer' editing and involves deacylation of mischarged Val-tRNA(Ile). This chain is Isoleucine--tRNA ligase, found in Cupriavidus taiwanensis (strain DSM 17343 / BCRC 17206 / CCUG 44338 / CIP 107171 / LMG 19424 / R1) (Ralstonia taiwanensis (strain LMG 19424)).